We begin with the raw amino-acid sequence, 478 residues long: Solute carrier family 7 member 13 (478 aa).

Residues 1-14 (MAMDSKKEIRLKRE) lie on the Cytoplasmic side of the membrane. The chain crosses the membrane as a helical span at residues 15–35 (LGYFWGTNFLIINIIGAGIFV). Residues 36–47 (SPKGVLQHSSMN) lie on the Extracellular side of the membrane. A helical membrane pass occupies residues 48–68 (VGVSLCVWAVCAVLTLTSALC). Over 69–89 (SAEIGITFPYSGAHYYFLKRC) the chain is Cytoplasmic. Residues 90-110 (FGPLVAFLRLWTSLFLGPGLI) traverse the membrane as a helical segment. The Extracellular portion of the chain corresponds to 111–129 (ASQALLLAEYGVQPFYPSC). A helical membrane pass occupies residues 130–150 (SAPILPRKCLALAMLWIVGIL). Topologically, residues 151-163 (NSRGVKELSWLQT) are cytoplasmic. Residues 164 to 184 (VSSVLKVGILGVISLSGLFLL) traverse the membrane as a helical segment. Residues 185-208 (VRGKKENVQRLQNAFDAEFPEVSQ) lie on the Extracellular side of the membrane. Residues 209-229 (LIEAIFQGYFAFSGGGCFTCI) traverse the membrane as a helical segment. Residues 230–242 (AGELKKPSKTIPR) are Cytoplasmic-facing. The helical transmembrane segment at 243–263 (CIFTGLPLVTVVYLLANISYL) threads the bilayer. Over 264-288 (TVLTPQEMLSSDAVALTWTDRVIPQ) the chain is Extracellular. The helical transmembrane segment at 289–309 (FTWTVPFAISASLFINLVINV) threads the bilayer. Over 310–338 (LETSRVLYIASENGQLPLLFCALNVHSSP) the chain is Cytoplasmic. A helical membrane pass occupies residues 339-359 (FIAVLLIISMASILIVLTNLI). Position 360 (aspartate 360) is a topological domain, extracellular. The chain crosses the membrane as a helical span at residues 361–381 (LINYLYFVVSIWTALSIIGIL). Residues 382–395 (KLRYQEPNLHRPYK) are Cytoplasmic-facing. Residues 396-416 (VFLPFTFIALGITLSLVLIPL) traverse the membrane as a helical segment. Residues 417–423 (VKSPKLH) are Extracellular-facing. A helical membrane pass occupies residues 424 to 444 (YIYVFLFLLSGLVFYVPLIHF). The Cytoplasmic portion of the chain corresponds to 445-478 (KVKFVWFQKLTCYLQLLFNICIPDVSDDHIHEES).

It belongs to the amino acid-polyamine-organocation (APC) superfamily. In terms of assembly, disulfide-linked heterodimer composed of the catalytic light subunit SLC7A13 and the heavy subunit SLC3A1. In terms of tissue distribution, expressed in renal tubules in the outer stripe of the outer medulla and medullary ray (at protein level). Detected in male but not in female kidney.

The protein localises to the apical cell membrane. The catalysed reaction is L-cystine(out) + L-aspartate(in) = L-cystine(in) + L-aspartate(out). It catalyses the reaction L-cystine(out) = L-cystine(in). The enzyme catalyses L-aspartate(in) + L-glutamate(out) = L-aspartate(out) + L-glutamate(in). It carries out the reaction L-aspartate(in) + L-glutamine(out) = L-aspartate(out) + L-glutamine(in). The catalysed reaction is L-aspartate(in) + L-methionine(out) = L-aspartate(out) + L-methionine(in). It catalyses the reaction L-leucine(out) + L-aspartate(in) = L-leucine(in) + L-aspartate(out). The enzyme catalyses L-valine(out) + L-aspartate(in) = L-valine(in) + L-aspartate(out). It carries out the reaction L-aspartate(in) + L-phenylalanine(out) = L-aspartate(out) + L-phenylalanine(in). The catalysed reaction is L-tyrosine(out) + L-aspartate(in) = L-tyrosine(in) + L-aspartate(out). It catalyses the reaction L-tryptophan(out) + L-aspartate(in) = L-tryptophan(in) + L-aspartate(out). Its function is as follows. Associates with SLC3A1/rBAT to form a functional heterodimeric complex that transports anionic and neutral amino acids across the apical plasma membrane of renal epithelium. Preferentially mediates exchange transport, but can also operate via facilitated diffusion. May act as a major transporter for L-cystine in late proximal tubules, ensuring its reabsorption from the luminal fluid in exchange for cytosolic L-glutamate or L-aspartate. This is Solute carrier family 7 member 13 from Mus musculus (Mouse).